A 266-amino-acid polypeptide reads, in one-letter code: Pre-mRNA-splicing factor CWC26 (266 aa).

Disordered stretches follow at residues 1 to 37 (MALH…DKTS) and 118 to 149 (TRKT…KYED). Positions 16–26 (PKNKTKKKKKE) are enriched in basic residues. Positions 122-149 (IYRDAQGHKIQEDSKIDDSSFSRSKYED) are enriched in basic and acidic residues.

This sequence belongs to the CWC26 family. In terms of assembly, belongs to the pre-mRNA retention and splicing (RES) complex composed of at least BUD13, IST3 and PML1. May also belong to the CWC complex (or CEF1-associated complex) composed of the U2, U5 and U6 snRNAs and at least BUD13, BUD31, BRR2, CDC40, CEF1, CLF1, CUS1, CWC2, CWC15, CWC21, CWC22, CWC23, CWC24, CWC25, CWC27, ECM2, HSH155, IST3, ISY1, LEA1, MSL1, NTC20, PRP8, PRP9, PRP11, PRP19, PRP21, PRP22, PRP45, PRP46, SLU7, SMB1, SMD1, SMD2, SMD3, SMX2, SMX3, SNT309, SNU114, SPP2, SYF1, SYF2, RSE1 and YJU2. Interacts with IST3 and PML1.

The protein localises to the cytoplasm. It is found in the nucleus. Required for efficient splicing and pre-mRNA nuclear retention. May also be involved in positioning the proximal bud pole signal. In Saccharomyces cerevisiae (strain ATCC 204508 / S288c) (Baker's yeast), this protein is Pre-mRNA-splicing factor CWC26 (BUD13).